A 249-amino-acid chain; its full sequence is Triosephosphate isomerase (249 aa).

12-14 (NWK) serves as a coordination point for substrate. The Electrophile role is filled by histidine 96. Glutamate 166 acts as the Proton acceptor in catalysis. Residues glycine 172, serine 211, and 232–233 (GG) each bind substrate.

It belongs to the triosephosphate isomerase family. In terms of assembly, homodimer.

It localises to the cytoplasm. The enzyme catalyses D-glyceraldehyde 3-phosphate = dihydroxyacetone phosphate. Its pathway is carbohydrate biosynthesis; gluconeogenesis. It functions in the pathway carbohydrate degradation; glycolysis; D-glyceraldehyde 3-phosphate from glycerone phosphate: step 1/1. Its function is as follows. Involved in the gluconeogenesis. Catalyzes stereospecifically the conversion of dihydroxyacetone phosphate (DHAP) to D-glyceraldehyde-3-phosphate (G3P). This is Triosephosphate isomerase from Xanthobacter flavus.